Reading from the N-terminus, the 196-residue chain is MSRYRGPRLKKIRRLGALPGLTRKTPKSGSNQKKKFHSGKKEQYRIRLQEKQKLRFHYGLTERQLLRYVHIAGKAKRSTGQVLLQLLEMRLDNILFRLGMASTIPGARQLVNHRHILVNGRIVDIPSFRCKPRDIITTKDNQRSKRLVQNYIASSDPGKLPKHLTVDTLQYKGLVKKILDRKWVGLKINELLVVEY.

Residues 15–43 (LGALPGLTRKTPKSGSNQKKKFHSGKKEQ) form a disordered region. The S4 RNA-binding domain maps to 89–150 (MRLDNILFRL…NQRSKRLVQN (62 aa)).

This sequence belongs to the universal ribosomal protein uS4 family. As to quaternary structure, part of the 30S ribosomal subunit. Contacts protein S5. The interaction surface between S4 and S5 is involved in control of translational fidelity.

It localises to the plastid. The protein localises to the chloroplast. Functionally, one of the primary rRNA binding proteins, it binds directly to 16S rRNA where it nucleates assembly of the body of the 30S subunit. In terms of biological role, with S5 and S12 plays an important role in translational accuracy. The sequence is that of Small ribosomal subunit protein uS4c (rps4) from Bothriochloa ischaemum (Yellow bluestem).